We begin with the raw amino-acid sequence, 530 residues long: Growth-regulating factor 1 (530 aa).

The segment at 1-41 (MDLGVRVSGHETVSSPGQTELGSGFSNKQERSGFDGEDCWR) is disordered. Polar residues predominate over residues 11 to 27 (ETVSSPGQTELGSGFSN). Over residues 28–41 (KQERSGFDGEDCWR) the composition is skewed to basic and acidic residues. Residues 133–168 (PFSLTQWAELEQQALIYKYITANVPVPSSLLLSLKK) enclose the QLQ domain. In terms of domain architecture, WRC spans 196 to 240 (DPEPGRCRRTDGKKWRCSRDAVPDQKYCERHINRGRHRSRKPVEG). Short sequence motifs (bipartite nuclear localization signal) lie at residues 201-211 (RCRRTDGKKWR) and 229-236 (RGRHRSRK). Disordered stretches follow at residues 223–250 (CERH…NAAA) and 485–530 (STFG…APSL). The segment covering 485-508 (STFGSLSNSSSASSTIIGDNNNKN) has biased composition (low complexity). Residues 519 to 530 (TLMNTSATAPSL) are compositionally biased toward polar residues.

The protein belongs to the GRF family. As to quaternary structure, interacts with GIF1 and GIF2. As to expression, strongly expressed in actively growing and developing tissues, such as roots, upper stems, and shoot tips containing the shoot apical meristem (SAM) and flower buds. Also expressed in mature flowers, but weakly expressed in mature stems and leaves.

Its subcellular location is the nucleus. In terms of biological role, transcription activator that plays a role in the regulation of cell expansion in leaf and cotyledons tissues. Component of a network formed by miR396, the GRFs and their interacting factors (GIFs) acting in the regulation of meristem function, at least partially through the control of cell proliferation. microRNA396-GRF1/GRF3 regulatory module acts as a developmental regulator in the reprogramming of root cells during cyst nematode infection, leading to the formation of the syncytium. The chain is Growth-regulating factor 1 (GRF1) from Arabidopsis thaliana (Mouse-ear cress).